We begin with the raw amino-acid sequence, 320 residues long: Ferrochelatase (320 aa).

The Fe cation site is built by His-194 and Glu-275.

Belongs to the ferrochelatase family. As to quaternary structure, monomer.

The protein localises to the cytoplasm. The catalysed reaction is heme b + 2 H(+) = protoporphyrin IX + Fe(2+). It functions in the pathway porphyrin-containing compound metabolism; protoheme biosynthesis; protoheme from protoporphyrin-IX: step 1/1. Catalyzes the ferrous insertion into protoporphyrin IX. This Escherichia coli O45:K1 (strain S88 / ExPEC) protein is Ferrochelatase.